The sequence spans 317 residues: MPREDRATWKSNYFLKIIQLLDDYPKCFIVGADNVGSKQMQQIRMSLRGKAVVLMGKNTMMRKAIRGHLENNPALEKLLPHIRGNVGFVFTKEDLTEIRDMLLANKVPAAARAGAIAPCEVTVPAQNTGLGPEKTSFFQALGITTKISRGTIEILSDVQLIKTGDKVGASEATLLNMLNISPFSFGLVIQQVFDNGSIYNPEVLDITEETLHSRFLEGVRNVASVCLQIGYPTVASVPHSIINGYKRVLALSVETDYTFPLAEKVKAFLADPSAFVAAAPVAAATTAAPAAAAAPAKVEAKEESEESDEDMGFGLFD.

Y24 carries the phosphotyrosine modification. T59 is modified (phosphothreonine). K264 is covalently cross-linked (Glycyl lysine isopeptide (Lys-Gly) (interchain with G-Cter in ubiquitin)). Positions 294–317 (APAKVEAKEESEESDEDMGFGLFD) are disordered. K297 is covalently cross-linked (Glycyl lysine isopeptide (Lys-Gly) (interchain with G-Cter in SUMO1); alternate). K297 is covalently cross-linked (Glycyl lysine isopeptide (Lys-Gly) (interchain with G-Cter in SUMO2); alternate). Positions 302-311 (EESEESDEDM) are enriched in acidic residues. Residues S304 and S307 each carry the phosphoserine modification.

Belongs to the universal ribosomal protein uL10 family. As to quaternary structure, P0 forms a pentameric complex by interaction with dimers of P1 and P2. Identified in a IGF2BP1-dependent mRNP granule complex containing untranslated mRNAs. Interacts with APEX1. Interacts with FMR1 isoform 6. In terms of processing, ubiquitinated at Lys-264 by RNF14 and RNF25 in response to ribosome collisions (ribosome stalling).

The protein localises to the nucleus. Its subcellular location is the cytoplasm. Functionally, ribosomal protein P0 is the functional equivalent of E.coli protein L10. The protein is Large ribosomal subunit protein uL10 (RPLP0) of Homo sapiens (Human).